The chain runs to 375 residues: Succinyl-diaminopimelate desuccinylase (375 aa).

Zn(2+) is bound at residue His66. Asp68 is a catalytic residue. Asp99 contacts Zn(2+). The active-site Proton acceptor is the Glu133. 3 residues coordinate Zn(2+): Glu134, Glu162, and His348.

Belongs to the peptidase M20A family. DapE subfamily. In terms of assembly, homodimer. Zn(2+) serves as cofactor. The cofactor is Co(2+).

The catalysed reaction is N-succinyl-(2S,6S)-2,6-diaminopimelate + H2O = (2S,6S)-2,6-diaminopimelate + succinate. It functions in the pathway amino-acid biosynthesis; L-lysine biosynthesis via DAP pathway; LL-2,6-diaminopimelate from (S)-tetrahydrodipicolinate (succinylase route): step 3/3. Its function is as follows. Catalyzes the hydrolysis of N-succinyl-L,L-diaminopimelic acid (SDAP), forming succinate and LL-2,6-diaminopimelate (DAP), an intermediate involved in the bacterial biosynthesis of lysine and meso-diaminopimelic acid, an essential component of bacterial cell walls. The protein is Succinyl-diaminopimelate desuccinylase of Shigella boydii serotype 18 (strain CDC 3083-94 / BS512).